The following is a 342-amino-acid chain: Galactose mutarotase (342 aa).

At S14 the chain carries Phosphoserine. Beta-D-galactose contacts are provided by residues 81–82 and H107; that span reads NR. A Phosphoserine modification is found at S124. The active-site Proton donor is the H176. Residues 176–178, D243, Q279, and E307 contribute to the beta-D-galactose site; that span reads HSY. E307 serves as the catalytic Proton acceptor.

It belongs to the aldose epimerase family. Monomer.

Its subcellular location is the cytoplasm. It carries out the reaction alpha-D-galactose = beta-D-galactose. The enzyme catalyses alpha-D-glucose = beta-D-glucose. Its pathway is carbohydrate metabolism; hexose metabolism. The protein operates within carbohydrate metabolism; galactose metabolism. In terms of biological role, mutarotase that catalyzes the interconversion of beta-D-galactose and alpha-D-galactose during galactose metabolism. Beta-D-galactose is metabolized in the liver into glucose 1-phosphate, the primary metabolic fuel, by the action of four enzymes that constitute the Leloir pathway: GALM, GALK1 (galactokinase), GALT (galactose-1-phosphate uridylyltransferase) and GALE (UDP-galactose-4'-epimerase). Involved in the maintenance of the equilibrium between the beta- and alpha-anomers of galactose, therefore ensuring a sufficient supply of the alpha-anomer for GALK1. Also active on D-glucose although shows a preference for galactose over glucose. The chain is Galactose mutarotase (GALM) from Sus scrofa (Pig).